The chain runs to 274 residues: Diaminopimelate epimerase (274 aa).

3 residues coordinate substrate: asparagine 11, glutamine 44, and asparagine 64. Cysteine 73 acts as the Proton donor in catalysis. Substrate-binding positions include 74-75 (GN), asparagine 157, asparagine 190, and 208-209 (ER). Residue cysteine 217 is the Proton acceptor of the active site. 218 to 219 (GS) contacts substrate.

The protein belongs to the diaminopimelate epimerase family. Homodimer.

Its subcellular location is the cytoplasm. The catalysed reaction is (2S,6S)-2,6-diaminopimelate = meso-2,6-diaminopimelate. Its pathway is amino-acid biosynthesis; L-lysine biosynthesis via DAP pathway; DL-2,6-diaminopimelate from LL-2,6-diaminopimelate: step 1/1. Functionally, catalyzes the stereoinversion of LL-2,6-diaminopimelate (L,L-DAP) to meso-diaminopimelate (meso-DAP), a precursor of L-lysine and an essential component of the bacterial peptidoglycan. In Haemophilus influenzae (strain PittEE), this protein is Diaminopimelate epimerase.